A 356-amino-acid polypeptide reads, in one-letter code: tRNA N6-adenosine threonylcarbamoyltransferase (356 aa).

Positions 116 and 120 each coordinate Fe cation. Substrate contacts are provided by residues 139–143 (IVSGG), Asp174, Gly187, Asp191, and Asn281. Fe cation is bound at residue Asp309.

This sequence belongs to the KAE1 / TsaD family. Fe(2+) is required as a cofactor.

It is found in the cytoplasm. The enzyme catalyses L-threonylcarbamoyladenylate + adenosine(37) in tRNA = N(6)-L-threonylcarbamoyladenosine(37) in tRNA + AMP + H(+). Required for the formation of a threonylcarbamoyl group on adenosine at position 37 (t(6)A37) in tRNAs that read codons beginning with adenine. Is involved in the transfer of the threonylcarbamoyl moiety of threonylcarbamoyl-AMP (TC-AMP) to the N6 group of A37, together with TsaE and TsaB. TsaD likely plays a direct catalytic role in this reaction. The protein is tRNA N6-adenosine threonylcarbamoyltransferase of Frankia casuarinae (strain DSM 45818 / CECT 9043 / HFP020203 / CcI3).